Consider the following 178-residue polypeptide: MHSSALLCCLVLLTGVRASPGQGTQSENSCTHFPGNLPNMLRDLRDAFSRVKTFFQMKDQLDNLLLKESLLEDFKGYLGCQALSEMIQFYLEEVMPQAENQDPDIKAHVNSLGENLKTLRLRLRRCHRFLPCENKSKAVEQVKNAFNKLQEKGIYKAMSEFDIFINYIEAYMTMKIRN.

A signal peptide spans 1–18; it reads MHSSALLCCLVLLTGVRA. Intrachain disulfides connect cysteine 30/cysteine 126 and cysteine 80/cysteine 132. Asparagine 134 carries N-linked (GlcNAc...) asparagine glycosylation.

The protein belongs to the IL-10 family. Homodimer. Interacts with IL10RA and IL10RB. Produced by a variety of cell lines, including T-cells, macrophages, mast cells and other cell types.

Its subcellular location is the secreted. Its function is as follows. Major immune regulatory cytokine that acts on many cells of the immune system where it has profound anti-inflammatory functions, limiting excessive tissue disruption caused by inflammation. Mechanistically, IL10 binds to its heterotetrameric receptor comprising IL10RA and IL10RB leading to JAK1 and STAT2-mediated phosphorylation of STAT3. In turn, STAT3 translocates to the nucleus where it drives expression of anti-inflammatory mediators. Targets antigen-presenting cells (APCs) such as macrophages and monocytes and inhibits their release of pro-inflammatory cytokines including granulocyte-macrophage colony-stimulating factor /GM-CSF, granulocyte colony-stimulating factor/G-CSF, IL-1 alpha, IL-1 beta, IL-6, IL-8 and TNF-alpha. Also interferes with antigen presentation by reducing the expression of MHC-class II and co-stimulatory molecules, thereby inhibiting their ability to induce T cell activation. In addition, controls the inflammatory response of macrophages by reprogramming essential metabolic pathways including mTOR signaling. The chain is Interleukin-10 (IL10) from Homo sapiens (Human).